Reading from the N-terminus, the 292-residue chain is Phosphatidylglycerol--prolipoprotein diacylglyceryl transferase (292 aa).

The next 7 membrane-spanning stretches (helical) occupy residues I25–A45, F70–W90, I102–A122, F138–I158, F193–F213, G217–Y237, and G255–L275. R153 is an a 1,2-diacyl-sn-glycero-3-phospho-(1'-sn-glycerol) binding site.

The protein belongs to the Lgt family.

The protein localises to the cell inner membrane. It catalyses the reaction L-cysteinyl-[prolipoprotein] + a 1,2-diacyl-sn-glycero-3-phospho-(1'-sn-glycerol) = an S-1,2-diacyl-sn-glyceryl-L-cysteinyl-[prolipoprotein] + sn-glycerol 1-phosphate + H(+). The protein operates within protein modification; lipoprotein biosynthesis (diacylglyceryl transfer). Its function is as follows. Catalyzes the transfer of the diacylglyceryl group from phosphatidylglycerol to the sulfhydryl group of the N-terminal cysteine of a prolipoprotein, the first step in the formation of mature lipoproteins. This is Phosphatidylglycerol--prolipoprotein diacylglyceryl transferase from Bartonella tribocorum (strain CIP 105476 / IBS 506).